A 317-amino-acid chain; its full sequence is Ribonuclease Z (317 aa).

Residues histidine 61, histidine 63, aspartate 65, histidine 66, histidine 153, aspartate 221, and histidine 280 each coordinate Zn(2+). Catalysis depends on aspartate 65, which acts as the Proton acceptor.

This sequence belongs to the RNase Z family. Homodimer. It depends on Zn(2+) as a cofactor.

It carries out the reaction Endonucleolytic cleavage of RNA, removing extra 3' nucleotides from tRNA precursor, generating 3' termini of tRNAs. A 3'-hydroxy group is left at the tRNA terminus and a 5'-phosphoryl group is left at the trailer molecule.. Its function is as follows. Zinc phosphodiesterase, which displays some tRNA 3'-processing endonuclease activity. Probably involved in tRNA maturation, by removing a 3'-trailer from precursor tRNA. This chain is Ribonuclease Z, found in Alkaliphilus oremlandii (strain OhILAs) (Clostridium oremlandii (strain OhILAs)).